A 1169-amino-acid polypeptide reads, in one-letter code: Protein MBD-R2 (1169 aa).

The THAP-type zinc finger occupies 5-59 (CCVANCPSTSRLLEHNGVTYHSFPLDPIIRAIWIKNSRISLERQITKSVLVCSRH). 3 disordered regions span residues 99–122 (RALQ…STND), 140–211 (SAER…KYSN), and 347–394 (AEEG…CAPQ). Polar residues predominate over residues 107–122 (EGTTETPGNAQSSTND). The segment covering 140-160 (SAERKATEEGKTGKAADDVKN) has biased composition (basic and acidic residues). Low complexity predominate over residues 190–202 (PAPGSASSSNSPL). Polar residues predominate over residues 353–363 (KSPTPVGTPVS). The region spanning 445–514 (KPTVIVQDWR…DVYDFSIHRR (70 aa)) is the MBD domain. The segment at 527–565 (GYNPQPPPKPRPMDVSMNSTLDQSITSQHSLPSTPMPVK) is disordered. Over residues 542 to 559 (SMNSTLDQSITSQHSLPS) the composition is skewed to polar residues. The segment at 640 to 665 (YVCPREDCAKTYRKEDFLLIHIRHYH) adopts a C2H2-type zinc-finger fold. Residues 714–890 (QDLQQSRSFK…INAALAPPPA (177 aa)) form a disordered region. Residues 726–742 (SVSATATSSTPSDITPT) show a composition bias toward low complexity. Positions 774 to 784 (PTQSFNPSLSR) are enriched in polar residues. Residues 798-810 (SGSRKSNRQRSQR) are compositionally biased toward basic residues. 2 stretches are compositionally biased toward polar residues: residues 853-862 (AATTPISSID) and 869-881 (SVST…QTDI).

Component of the non-specific lethal (NLS) histone acetyltransferase complex at least composed of mof, nls1, dgt1/NSL2, Rcd1/NSL3, Rcd5/MCRS2, MBD-R2 and wds.

It localises to the nucleus. The protein resides in the chromosome. Its function is as follows. Component of the non-specific lethal (NLS) complex, a multiprotein complex that promotes expression of housekeeping genes on X chromosome and autosomes. The polypeptide is Protein MBD-R2 (Drosophila melanogaster (Fruit fly)).